Here is a 165-residue protein sequence, read N- to C-terminus: NADPH-dependent 7-cyano-7-deazaguanine reductase (165 aa).

C56 acts as the Thioimide intermediate in catalysis. Catalysis depends on D63, which acts as the Proton donor. Substrate-binding positions include 78-80 (VES) and 97-98 (HE).

The protein belongs to the GTP cyclohydrolase I family. QueF type 1 subfamily.

It is found in the cytoplasm. It catalyses the reaction 7-aminomethyl-7-carbaguanine + 2 NADP(+) = 7-cyano-7-deazaguanine + 2 NADPH + 3 H(+). It participates in tRNA modification; tRNA-queuosine biosynthesis. In terms of biological role, catalyzes the NADPH-dependent reduction of 7-cyano-7-deazaguanine (preQ0) to 7-aminomethyl-7-deazaguanine (preQ1). This Geobacillus thermodenitrificans (strain NG80-2) protein is NADPH-dependent 7-cyano-7-deazaguanine reductase.